Reading from the N-terminus, the 24-residue chain is Cytochrome c oxidase subunit 7A2, mitochondrial (24 aa).

Residues 1 to 13 (FENKVPEKQKLFQ) are compositionally biased toward basic and acidic residues. A disordered region spans residues 1–24 (FENKVPEKQKLFQEDNGIPVHLKG). The residue at position 10 (Lys-10) is an N6-acetyllysine.

The protein belongs to the cytochrome c oxidase VIIa family. As to quaternary structure, component of the cytochrome c oxidase (complex IV, CIV), a multisubunit enzyme composed of 14 subunits. The complex is composed of a catalytic core of 3 subunits MT-CO1, MT-CO2 and MT-CO3, encoded in the mitochondrial DNA, and 11 supernumerary subunits COX4I, COX5A, COX5B, COX6A, COX6B, COX6C, COX7A, COX7B, COX7C, COX8 and NDUFA4, which are encoded in the nuclear genome. The complex exists as a monomer or a dimer and forms supercomplexes (SCs) in the inner mitochondrial membrane with NADH-ubiquinone oxidoreductase (complex I, CI) and ubiquinol-cytochrome c oxidoreductase (cytochrome b-c1 complex, complex III, CIII), resulting in different assemblies (supercomplex SCI(1)III(2)IV(1) and megacomplex MCI(2)III(2)IV(2)). Interacts with PET100.

The protein resides in the mitochondrion inner membrane. It participates in energy metabolism; oxidative phosphorylation. In terms of biological role, component of the cytochrome c oxidase, the last enzyme in the mitochondrial electron transport chain which drives oxidative phosphorylation. The respiratory chain contains 3 multisubunit complexes succinate dehydrogenase (complex II, CII), ubiquinol-cytochrome c oxidoreductase (cytochrome b-c1 complex, complex III, CIII) and cytochrome c oxidase (complex IV, CIV), that cooperate to transfer electrons derived from NADH and succinate to molecular oxygen, creating an electrochemical gradient over the inner membrane that drives transmembrane transport and the ATP synthase. Cytochrome c oxidase is the component of the respiratory chain that catalyzes the reduction of oxygen to water. Electrons originating from reduced cytochrome c in the intermembrane space (IMS) are transferred via the dinuclear copper A center (CU(A)) of subunit 2 and heme A of subunit 1 to the active site in subunit 1, a binuclear center (BNC) formed by heme A3 and copper B (CU(B)). The BNC reduces molecular oxygen to 2 water molecules using 4 electrons from cytochrome c in the IMS and 4 protons from the mitochondrial matrix. The chain is Cytochrome c oxidase subunit 7A2, mitochondrial (COX7A2) from Ovis aries (Sheep).